The chain runs to 497 residues: Delayed-rectifier potassium channel regulatory subunit KCNS1 (497 aa).

The Cytoplasmic segment spans residues 1–186 (MVSEFPGPGS…LTMENPGYSL (186 aa)). Residues 187–208 (PSKLFSCVSIGVVLASIAAMCI) form a helical membrane-spanning segment. At 209-239 (HSLPEYQAREAAAAVAAVAAGRSAEDVRDDP) the chain is on the extracellular side. Residues 240-262 (VLRRLEYFCIAWFSFEVSSRLLL) traverse the membrane as a helical segment. Topologically, residues 263–273 (APSTRNFFCHP) are cytoplasmic. Residues 274–291 (LNLIDIVSVLPFYLTLLA) form a helical membrane-spanning segment. Over 292–309 (GAALGDRRGASGEELGDL) the chain is Extracellular. A helical; Voltage-sensor transmembrane segment spans residues 310–330 (GKVVQVFRLMRIFRVLKLARH). Residues 331–345 (STGLRSLGATLKHSY) are Cytoplasmic-facing. A helical membrane pass occupies residues 346–367 (REVGILLLYLAVGVSVFSGVAY). Residues 368–379 (TAEEKNVGFDTI) lie on the Extracellular side of the membrane. The helical intramembrane region spans 380-391 (PACWWWGTVSMT). The Selectivity filter motif lies at 392–397 (TVGYGD). An intramembrane segment occupies 392–399 (TVGYGDVV). Residues 400–406 (PETVAGK) lie on the Extracellular side of the membrane. A helical transmembrane segment spans residues 407-435 (LAASGCILGGILVVALPITIIFNKFSHFY). Residues 436–497 (RRQKALEAAV…PSEPAKSHSY (62 aa)) are Cytoplasmic-facing. The interval 464 to 497 (SDVSLETSRETSQEGRSTDLETQAPSEPAKSHSY) is disordered. The span at 470-482 (TSRETSQEGRSTD) shows a compositional bias: basic and acidic residues.

Belongs to the potassium channel family. S (TC 1.A.1.2) subfamily. Kv9.1/KCNS1 sub-subfamily. Heterotetramer with KCNB1. Heterotetramer with KCNB2. Does not form homomultimers. As to expression, highly expressed in brain, but not in the other tissues tested.

The protein resides in the cell membrane. In terms of biological role, potassium channel regulatory subunit that modulate the delayed rectifier voltage-gated potassium channel activity of KCNB1 and KCNB2 by altering their kinetics, expression levels, and shifting the half-inactivation potential to more polarized values. While it does not form functional channels on its own, it can form functional heterotetrameric channels with KCNB1 and KCNB2. Each regulatory subunit has unique regulatory properties that can lead to extensive inhibition, significant changes in kinetics, and/or substantial shifts in the voltage dependencies of the inactivation process. The chain is Delayed-rectifier potassium channel regulatory subunit KCNS1 from Rattus norvegicus (Rat).